We begin with the raw amino-acid sequence, 2803 residues long: Microtubule-associated protein 1A (2803 aa).

Phosphoserine occurs at positions 114, 117, 118, 121, and 155. Tyr177 is modified (phosphotyrosine). Disordered regions lie at residues 302 to 466 and 486 to 516; these read GAVP…DLKP and IDRS…PLPT. 3 positions are modified to phosphoserine: Ser319, Ser322, and Ser384. Over residues 335 to 390 the composition is skewed to basic and acidic residues; that stretch reads AKREEVVEEGAKEARSELAKELAKTEKKAKESSEKPPEKPAKPERVKTESSEALKA. Basic residues predominate over residues 391-406; the sequence is EKRKLIKDKVGKKHLK. Composition is skewed to basic and acidic residues over residues 407 to 464 and 486 to 499; these read EKIS…KPDL and IDRS…KELS. 8 repeat units span residues 415-417, 420-422, 427-429, 431-433, 436-438, 440-442, 444-446, and 449-451. The tract at residues 415 to 541 is 9 X 3 AA repeats of K-K-[DE]; the sequence is KKDKEKKEIK…TQDFEEMKRE (127 aa). Thr504 is subject to Phosphothreonine. Ser526 and Ser527 each carry phosphoserine. Repeat 9 spans residues 539–541; that stretch reads KRE. Composition is skewed to basic and acidic residues over residues 539-554 and 585-596; these read KREE…DTGL and QEEHVMKEKELV. Disordered stretches follow at residues 539–712, 734–806, 847–1080, 1109–1548, and 1573–1605; these read KREE…KAPE, YIQD…GTPE, EDQS…VNID, TGPI…EKKD, and EENH…EKVK. Residues Ser605 and Ser612 each carry the phosphoserine modification. The residue at position 616 (Thr616) is a Phosphothreonine. Residues 623-667 show a composition bias toward basic and acidic residues; it reads WEEKKQREAERLPDRTEAREESEPEVKEDVIEKAELEEMEEVHPS. 3 positions are modified to phosphoserine: Ser644, Ser667, and Ser787. Polar residues-rich tracts occupy residues 847–860 and 871–883; these read EDQS…PQTE and TVTS…TEAT. Phosphoserine occurs at positions 874, 877, 878, and 891. A Phosphothreonine modification is found at Thr894. Phosphoserine is present on residues Ser896, Ser900, Ser909, Ser986, Ser996, Ser1004, Ser1013, Ser1019, and Ser1029. Over residues 1031 to 1065 the composition is skewed to basic and acidic residues; that stretch reads GDTKRTPGVGKEDAAEETVKPGPEEGTLEKEEKVP. Residues Ser1069, Ser1144, Ser1146, Ser1160, Ser1172, Ser1190, Ser1200, Ser1203, Ser1209, Ser1218, Ser1221, and Ser1264 each carry the phosphoserine modification. Positions 1131 to 1146 are enriched in basic and acidic residues; it reads KPQKDEVLRYPDRSLS. Positions 1154 to 1169 are enriched in polar residues; the sequence is SVLSVPSPDTANQEPT. 2 stretches are compositionally biased toward polar residues: residues 1211 to 1224 and 1264 to 1278; these read DVSS…SLGT and SPPT…AQTD. The segment covering 1289–1299 has biased composition (low complexity); it reads PASSFSHSTPS. Ser1326, Ser1329, Ser1544, Ser1600, and Ser1626 each carry phosphoserine. Basic and acidic residues-rich tracts occupy residues 1338-1548 and 1586-1605; these read IAIK…EKKD and QEDK…EKVK. Over residues 1632 to 1642 the composition is skewed to basic and acidic residues; the sequence is RAREQEEKYWR. Disordered stretches follow at residues 1632 to 1684, 1713 to 1879, and 1892 to 2673; these read RARE…RYWR, DGQG…FSWG, and EGAA…LVNG. Position 1654 is a phosphoserine (Ser1654). Over residues 1655–1666 the composition is skewed to basic and acidic residues; it reads PTREEPAGEQKE. Phosphoserine occurs at positions 1675, 1749, 1762, 1776, 1791, 1797, 1801, 1812, and 1818. Residues 1852–1867 show a composition bias toward pro residues; the sequence is LPPAPLSPAPGPPTPA. Basic and acidic residues predominate over residues 1907–1929; the sequence is KDYRKAEGEREEEGRAEAPDKSS. Phosphoserine is present on Ser1931. Positions 1951 to 1964 are enriched in basic and acidic residues; it reads PEQREPTPYPDERS. Residue Thr1957 is modified to Phosphothreonine. Residues 2019 to 2033 show a composition bias toward polar residues; it reads SPISPKSLQSDTPTF. Position 2022 is a phosphoserine (Ser2022). Positions 2042–2066 are enriched in pro residues; that stretch reads TVPPRPEPGPSMEPSLTPPAVPPRA. The residue at position 2058 (Thr2058) is a Phosphothreonine. Phosphoserine is present on residues Ser2074, Ser2104, Ser2106, and Ser2108. Residues 2086-2122 show a composition bias toward basic and acidic residues; it reads PDRRSPSPKESGRSHWDDSTSDSELEKGAREQPEKEA. The segment covering 2175–2184 has biased composition (pro residues); that stretch reads PAPPQLPSPA. Residues Ser2235, Ser2252, Ser2256, Ser2259, and Ser2260 each carry the phosphoserine modification. Positions 2257 to 2268 are enriched in polar residues; it reads EGSSSEATTPVI. Low complexity predominate over residues 2312-2325; the sequence is ASLDLALAPAPSLP. Phosphoserine is present on Ser2449. The span at 2461 to 2473 shows a compositional bias: basic and acidic residues; it reads IDDRDLSTEEVRL. The span at 2502 to 2514 shows a compositional bias: low complexity; it reads SASDSGSSQSDSD. Over residues 2559–2575 the composition is skewed to pro residues; it reads DPPPLPQPDPRPSPPRP. Over residues 2590 to 2602 the composition is skewed to basic and acidic residues; the sequence is GRVERLREKEKVQ. Phosphoserine is present on residues Ser2649 and Ser2664.

Belongs to the MAP1 family. As to quaternary structure, 3 different light chains, LC1 (a cleavage product of MAP1B), LC2 (a cleavage product of MAP1A) and LC3 (produced by one of the MAP1LC3 genes), can associate with the MAP1A or MAP1B heavy chains. Interacts with TIAM2. Interacts with guanylate kinase-like domain of DLG1, DLG2 and DLG4. Binds to CSNK1D. In terms of assembly, interacts with ELAVL4. In terms of processing, phosphorylated by CSNK1D. Post-translationally, LC2 is generated from MAP1A by proteolytic processing. In terms of tissue distribution, brain.

The protein resides in the cytoplasm. It localises to the cytoskeleton. Functionally, structural protein involved in the filamentous cross-bridging between microtubules and other skeletal elements. In Homo sapiens (Human), this protein is Microtubule-associated protein 1A (MAP1A).